The sequence spans 146 residues: SsrA-binding protein (146 aa).

Positions 127–139 are enriched in basic and acidic residues; sequence KRQTIKDRDNSRE. A disordered region spans residues 127–146; it reads KRQTIKDRDNSREARKHIRV.

The protein belongs to the SmpB family.

It localises to the cytoplasm. Functionally, required for rescue of stalled ribosomes mediated by trans-translation. Binds to transfer-messenger RNA (tmRNA), required for stable association of tmRNA with ribosomes. tmRNA and SmpB together mimic tRNA shape, replacing the anticodon stem-loop with SmpB. tmRNA is encoded by the ssrA gene; the 2 termini fold to resemble tRNA(Ala) and it encodes a 'tag peptide', a short internal open reading frame. During trans-translation Ala-aminoacylated tmRNA acts like a tRNA, entering the A-site of stalled ribosomes, displacing the stalled mRNA. The ribosome then switches to translate the ORF on the tmRNA; the nascent peptide is terminated with the 'tag peptide' encoded by the tmRNA and targeted for degradation. The ribosome is freed to recommence translation, which seems to be the essential function of trans-translation. The polypeptide is SsrA-binding protein (Malacoplasma penetrans (strain HF-2) (Mycoplasma penetrans)).